A 361-amino-acid polypeptide reads, in one-letter code: Nuclear pore complex protein NUP43 (361 aa).

Positions 51-73 (IQSLDPNPRGNHNTNPLIESLSS) are disordered. 3 WD repeats span residues 132–173 (FHVG…YRKV), 177–215 (NGLV…EAVS), and 225–265 (KTSA…QPIV).

Part of the nuclear pore complex (NPC). The NPC has an eight-fold symmetrical structure comprising a central transport channel and two rings, the cytoplasmic and nuclear rings, to which eight filaments are attached. The cytoplasmic filaments have loose ends, while the nuclear filaments are joined in a distal ring, forming a nuclear basket. NPCs are highly dynamic in configuration and composition, and can be devided in 3 subcomplexes, the NUP62 subcomplex, the NUP107-160 subcomplex and the NUP93 subcomplex, containing approximately 30 different nucleoporin proteins.

The protein resides in the nucleus envelope. It localises to the nucleus. Its subcellular location is the nuclear pore complex. In Arabidopsis thaliana (Mouse-ear cress), this protein is Nuclear pore complex protein NUP43.